A 267-amino-acid chain; its full sequence is Aliphatic sulfonates import ATP-binding protein SsuB 1 (267 aa).

One can recognise an ABC transporter domain in the interval 35-249 (VRVRGLRRVF…RRADPAFDRL (215 aa)). Residue 67–74 (GRSGSGKS) participates in ATP binding.

It belongs to the ABC transporter superfamily. Aliphatic sulfonates importer (TC 3.A.1.17.2) family. The complex is composed of two ATP-binding proteins (SsuB), two transmembrane proteins (SsuC) and a solute-binding protein (SsuA).

The protein resides in the cell membrane. It carries out the reaction ATP + H2O + aliphatic sulfonate-[sulfonate-binding protein]Side 1 = ADP + phosphate + aliphatic sulfonateSide 2 + [sulfonate-binding protein]Side 1.. Functionally, part of the ABC transporter complex SsuABC involved in aliphatic sulfonates import. Responsible for energy coupling to the transport system. This chain is Aliphatic sulfonates import ATP-binding protein SsuB 1, found in Frankia alni (strain DSM 45986 / CECT 9034 / ACN14a).